The following is a 303-amino-acid chain: Probable cell division protein WhiA (303 aa).

A DNA-binding region (H-T-H motif) is located at residues 272 to 303 (SIQQVADALEFPITKSGVNHRLRKINKIADDL).

The protein belongs to the WhiA family.

Its function is as follows. Involved in cell division and chromosome segregation. The sequence is that of Probable cell division protein WhiA from Streptococcus pyogenes serotype M6 (strain ATCC BAA-946 / MGAS10394).